A 195-amino-acid chain; its full sequence is Ras-related protein Rab-31 (195 aa).

Positions 16, 18, 19, 20, 21, 32, and 33 each coordinate GTP. Ser-20 is a Mg(2+) binding site. 2 short sequence motifs (switch) span residues 30 to 42 (HFDHNISPTIGAS) and 63 to 79 (AGQERFHSLAPMYYRGS). Ser-36 is subject to Phosphoserine. 6 residues coordinate GTP: Thr-38, Gly-64, Asn-119, Asp-122, Ala-150, and Lys-151. Residue Thr-38 participates in Mg(2+) binding. The tract at residues 168 to 195 (PPLGPQENGNSGGIKLGNQSLQASRRCC) is disordered. The span at 184 to 195 (GNQSLQASRRCC) shows a compositional bias: polar residues. S-geranylgeranyl cysteine attachment occurs at residues Cys-194 and Cys-195.

Belongs to the small GTPase superfamily. Rab family. Interacts with OCRL. Interacts (in GDP-bound form) with RIN3 and GAPVD1, which function as guanine exchange factors (GEF). Interacts with EGFR. Interacts with NGFR. Interacts (in GTP-bound form) with EEA1. Interacts (in GTP-bound form) with APPL2; interaction contributes to or enhances recruitment of APPL2 to the phagosomes; interaction enhances Fc-gamma receptor-mediated phagocytosis through PI3K/Akt signaling in macrophages. The cofactor is Mg(2+). In terms of tissue distribution, detected in brain astrocytes (at protein level).

It localises to the early endosome. The protein resides in the golgi apparatus. The protein localises to the trans-Golgi network. It is found in the trans-Golgi network membrane. Its subcellular location is the cytoplasmic vesicle. It localises to the phagosome. The protein resides in the phagosome membrane. It catalyses the reaction GTP + H2O = GDP + phosphate + H(+). Its activity is regulated as follows. Regulated by guanine nucleotide exchange factors (GEFs) including RIN3 and GAPVD1 which promote the exchange of bound GDP for free GTP. Regulated by GTPase activating proteins (GAPs) which increase the GTP hydrolysis activity. Inhibited by GDP dissociation inhibitors (GDIs) which prevent Rab-GDP dissociation. In terms of biological role, the small GTPases Rab are key regulators of intracellular membrane trafficking, from the formation of transport vesicles to their fusion with membranes. Rabs cycle between an inactive GDP-bound form and an active GTP-bound form that is able to recruit to membranes different set of downstream effectors directly responsible for vesicle formation, movement, tethering and fusion. Required for the integrity and for normal function of the Golgi apparatus and the trans-Golgi network. Plays a role in insulin-stimulated translocation of GLUT4 to the cell membrane. Plays a role in the maturation of phagosomes that engulf pathogens, such as S.aureus and Mycobacterium. Plays a role in M6PR transport from the trans-Golgi network to endosomes. Plays a role in the internalization of EGFR from the cell membrane into endosomes. The protein is Ras-related protein Rab-31 of Mus musculus (Mouse).